We begin with the raw amino-acid sequence, 1525 residues long: Dicer-like protein 1 (1525 aa).

The segment covering 37–52 (DLQEDDGSSDESDNDE) has biased composition (acidic residues). The segment at 37 to 65 (DLQEDDGSSDESDNDEREDHSKTGVSQQR) is disordered. The Helicase ATP-binding domain maps to 124–305 (LFERAKVQNT…DEATRLEKLL (182 aa)). Residue 137 to 144 (LDTGSGKT) coordinates ATP. The DEAH box motif lies at 250 to 253 (DEAH). A Helicase C-terminal domain is found at 439 to 605 (QLSPKVQVLR…SFCRTLPEDR (167 aa)). The Dicer dsRNA-binding fold domain occupies 641–731 (ATAILARYAS…NSIYHRRLPA (91 aa)). In terms of domain architecture, PAZ spans 881–1009 (ESLTYVRDND…ICIEPLKVSA (129 aa)). 2 consecutive RNase III domains span residues 1032–1192 (LISL…LSGG) and 1243–1394 (SRKI…VDSD). Positions 1283, 1380, and 1383 each coordinate Mg(2+). The 69-residue stretch at 1428 to 1496 (TFLHNRLTNE…SEKALAVLDE (69 aa)) folds into the DRBM domain. The Zn(2+) site is built by C1440, H1467, C1508, and C1510.

Belongs to the helicase family. Dicer subfamily. It depends on Mg(2+) as a cofactor. Mn(2+) is required as a cofactor.

In terms of biological role, dicer-like endonuclease involved in cleaving double-stranded RNA in the RNA interference (RNAi) pathway. Produces 21 to 25 bp dsRNAs (siRNAs) which target the selective destruction of homologous RNAs leading to sequence-specific suppression of gene expression, called post-transcriptional gene silencing (PTGS). Part of a broad host defense response against viral infection and transposons. In Aspergillus niger (strain ATCC MYA-4892 / CBS 513.88 / FGSC A1513), this protein is Dicer-like protein 1 (dcl1).